Here is a 208-residue protein sequence, read N- to C-terminus: Inner membrane-spanning protein YciB (208 aa).

Helical transmembrane passes span 49 to 69 (APVL…ILWL), 78 to 98 (TMLW…IYFH), 105 to 125 (WKPT…ELVF), 150 to 170 (FSWV…AFNF), and 178 to 198 (FKLF…AFFL).

Belongs to the YciB family.

The protein localises to the cell inner membrane. Plays a role in cell envelope biogenesis, maintenance of cell envelope integrity and membrane homeostasis. This chain is Inner membrane-spanning protein YciB, found in Polaromonas naphthalenivorans (strain CJ2).